We begin with the raw amino-acid sequence, 445 residues long: Argininosuccinate synthase (445 aa).

ATP contacts are provided by residues alanine 17–serine 25 and alanine 43. Tyrosine 99 contacts L-citrulline. ATP is bound by residues glycine 129 and threonine 131. L-aspartate is bound by residues threonine 131, asparagine 135, and aspartate 136. L-citrulline is bound at residue asparagine 135. Aspartate 136 lines the ATP pocket. L-citrulline-binding residues include arginine 139 and serine 192. ATP is bound at residue aspartate 194. L-citrulline-binding residues include threonine 201, glutamate 203, and glutamate 280.

Belongs to the argininosuccinate synthase family. Type 2 subfamily. In terms of assembly, homotetramer.

It localises to the cytoplasm. It carries out the reaction L-citrulline + L-aspartate + ATP = 2-(N(omega)-L-arginino)succinate + AMP + diphosphate + H(+). It functions in the pathway amino-acid biosynthesis; L-arginine biosynthesis; L-arginine from L-ornithine and carbamoyl phosphate: step 2/3. The sequence is that of Argininosuccinate synthase (argG) from Ralstonia nicotianae (strain ATCC BAA-1114 / GMI1000) (Ralstonia solanacearum).